The chain runs to 590 residues: Aspartate--tRNA ligase (590 aa).

L-aspartate is bound at residue E174. The tract at residues 198-201 is aspartate; the sequence is QLMK. R220 is an L-aspartate binding site. ATP contacts are provided by residues 220–222 and Q229; that span reads RDE. Residue H443 coordinates L-aspartate. Residue E484 coordinates ATP. R491 provides a ligand contact to L-aspartate. An ATP-binding site is contributed by 536–539; sequence GLDR.

This sequence belongs to the class-II aminoacyl-tRNA synthetase family. Type 1 subfamily. As to quaternary structure, homodimer.

Its subcellular location is the cytoplasm. The enzyme catalyses tRNA(Asp) + L-aspartate + ATP = L-aspartyl-tRNA(Asp) + AMP + diphosphate. Functionally, catalyzes the attachment of L-aspartate to tRNA(Asp) in a two-step reaction: L-aspartate is first activated by ATP to form Asp-AMP and then transferred to the acceptor end of tRNA(Asp). The protein is Aspartate--tRNA ligase of Lactococcus lactis subsp. lactis (strain IL1403) (Streptococcus lactis).